The primary structure comprises 485 residues: Probable glycine dehydrogenase (decarboxylating) subunit 2 (485 aa).

Position 273 is an N6-(pyridoxal phosphate)lysine (K273).

This sequence belongs to the GcvP family. C-terminal subunit subfamily. As to quaternary structure, the glycine cleavage system is composed of four proteins: P, T, L and H. In this organism, the P 'protein' is a heterodimer of two subunits. Pyridoxal 5'-phosphate is required as a cofactor.

The enzyme catalyses N(6)-[(R)-lipoyl]-L-lysyl-[glycine-cleavage complex H protein] + glycine + H(+) = N(6)-[(R)-S(8)-aminomethyldihydrolipoyl]-L-lysyl-[glycine-cleavage complex H protein] + CO2. Its function is as follows. The glycine cleavage system catalyzes the degradation of glycine. The P protein binds the alpha-amino group of glycine through its pyridoxal phosphate cofactor; CO(2) is released and the remaining methylamine moiety is then transferred to the lipoamide cofactor of the H protein. This is Probable glycine dehydrogenase (decarboxylating) subunit 2 from Bacillus licheniformis (strain ATCC 14580 / DSM 13 / JCM 2505 / CCUG 7422 / NBRC 12200 / NCIMB 9375 / NCTC 10341 / NRRL NRS-1264 / Gibson 46).